The chain runs to 1025 residues: DNA ligase 4 (1025 aa).

The interval 1–36 (MMQPTPAPSSAPGSPQRTQAEPEMETPSYPQPPQNV) is disordered. 10 residues coordinate ATP: glutamate 289, lysine 291, leucine 292, arginine 296, glutamate 349, phenylalanine 387, glutamate 447, lysine 452, lysine 469, and lysine 471. Catalysis depends on lysine 291, which acts as the N6-AMP-lysine intermediate. Glutamate 349 contacts Mg(2+). Glutamate 447 contacts Mg(2+). Positions 667 to 763 (VKTDIFNGMK…EPAPFKKKYF (97 aa)) constitute a BRCT 1 domain. Residues 773 to 904 (ADEYNEDDGE…TTPDVDGDVK (132 aa)) form a disordered region. Acidic residues-rich tracts occupy residues 775 to 785 (EYNEDDGEEEG) and 806 to 816 (SETEDEDEEQA). Residues 817 to 838 (PEIKEEQDGELHEWLKVDDRKS) show a composition bias toward basic and acidic residues. Positions 845 to 870 (DEEDSVTEDDSDNADVADEEEPDLDD) are enriched in acidic residues. Over residues 891-904 (RHRETTPDVDGDVK) the composition is skewed to basic and acidic residues. One can recognise a BRCT 2 domain in the interval 915–1025 (DPDVIFKHLC…TLLDEEGESF (111 aa)).

Belongs to the ATP-dependent DNA ligase family. The cofactor is Mg(2+).

It is found in the nucleus. The catalysed reaction is ATP + (deoxyribonucleotide)n-3'-hydroxyl + 5'-phospho-(deoxyribonucleotide)m = (deoxyribonucleotide)n+m + AMP + diphosphate.. Its function is as follows. DNA ligase involved in DNA non-homologous end joining (NHEJ); required for double-strand break (DSB) repair. The protein is DNA ligase 4 (LIG4) of Coprinopsis cinerea (strain Okayama-7 / 130 / ATCC MYA-4618 / FGSC 9003) (Inky cap fungus).